A 461-amino-acid polypeptide reads, in one-letter code: Tumor necrosis factor receptor superfamily member 1A (461 aa).

The first 29 residues, 1-29 (MGLSTVPGLLLPLVLRALLVDVYPAGVHG), serve as a signal peptide directing secretion. Topologically, residues 30-210 (LVLHPGDREK…RNDFQDTGTT (181 aa)) are extracellular. TNFR-Cys repeat units follow at residues 43-82 (LCPQ…TDCR), 83-125 (ECDN…DTVC), 126-166 (GCRK…DTIC), and 167-195 (NCHS…NLCP). Cystine bridges form between Cys-44/Cys-58, Cys-59/Cys-72, Cys-62/Cys-81, Cys-84/Cys-99, Cys-102/Cys-117, Cys-105/Cys-125, and Cys-127/Cys-143. The N-linked (GlcNAc...) asparagine glycan is linked to Asn-54. N-linked (GlcNAc...) asparagine glycosylation occurs at Asn-86. 2 N-linked (GlcNAc...) asparagine glycosylation sites follow: Asn-145 and Asn-151. 5 cysteine pairs are disulfide-bonded: Cys-146-Cys-158, Cys-149-Cys-166, Cys-168-Cys-179, Cys-182-Cys-194, and Cys-185-Cys-190. The chain crosses the membrane as a helical span at residues 211-233 (VLLPLVIFFGLCLAFFLFVGLAC). At 234–461 (RYQRWKPKLY…RLAPAPHLLR (228 aa)) the chain is on the cytoplasmic side. The N-SMase activation domain (NSD) stretch occupies residues 340–350 (LPKWGGSAHSA). The region spanning 362 to 447 (PATLYAVVDG…GCLEDIEEAL (86 aa)) is the Death domain.

As to quaternary structure, binding of TNF to the extracellular domain leads to homotrimerization. The aggregated death domains provide a novel molecular interface that interacts specifically with the death domain of TRADD. Various TRADD-interacting proteins such as TRAFS, RIPK1 and possibly FADD, are recruited to the complex by their association with TRADD. This complex activates at least two distinct signaling cascades, apoptosis and NF-kappa-B signaling. Interacts with BAG4, BABAM2, FEM1B, GRB2, SQSTM1 and TRPC4AP. Interacts with DAB2IP. Interacts directly with NOL3 (via CARD domain); inhibits TNF-signaling pathway. Interacts with SH3RF2, TRADD and RIPK1. SH3RF2 facilitates the recruitment of RIPK1 and TRADD to TNFRSF1A in a TNF-alpha-dependent process. Interacts with PGLYRP1; this interaction is important for cell death induction. Interacts (via death domain) with MADD (via death domain).

Its subcellular location is the cell membrane. The protein resides in the golgi apparatus membrane. Functionally, receptor for TNFSF2/TNF-alpha and homotrimeric TNFSF1/lymphotoxin-alpha. The adapter molecule FADD recruits caspase-8 to the activated receptor. The resulting death-inducing signaling complex (DISC) performs caspase-8 proteolytic activation which initiates the subsequent cascade of caspases (aspartate-specific cysteine proteases) mediating apoptosis. This is Tumor necrosis factor receptor superfamily member 1A (TNFRSF1A) from Sus scrofa (Pig).